The primary structure comprises 493 residues: FAD-linked oxidoreductase tazL (493 aa).

Residues 1-17 (MRSNTVILAALPLVASA) form the signal peptide. N-linked (GlcNAc...) asparagine glycosylation is found at Asn29, Asn41, Asn53, Asn91, Asn253, Asn318, and Asn387. An FAD-binding PCMH-type domain is found at 63–235 (WAEPTFAVTI…TSATYEIFDA (173 aa)).

The protein belongs to the oxygen-dependent FAD-linked oxidoreductase family.

It participates in secondary metabolite biosynthesis. FAD-linked oxidoreductase; part of the gene cluster that mediates the biosynthesis of azaterrilone A and other azaphilones, a class of fungal metabolites characterized by a highly oxygenated pyrano-quinone bicyclic core and exhibiting a broad range of bioactivities. The first step of the pathway begins with the non-reducing polyketide synthase tazA that assembles one acetyl-CoA starter unit, five malonyl-CoA units, and catalyzes a series of Claisen condensations, methylation, PT-mediated cyclization, and finally releases the first hexaketide precursor through the R-domain. The tazA product then undergoes reduction on its terminal ketone and the following pyran-ring formation by yet undetermined enzyme(s). Dehydration and enoyl reduction, possibly involving the trans-enoyl reductase tazE leads to the next intermediate. TazD is predicted as an acetyltransferase and might catalyze the acetylation steps leading to the synthesis of azaterrilone A. Azaterrilone A is not the final product of the taz pathway and both the highly reducing polyketide synthase tazB and the dual enzyme tazHJ catalyze late steps of the pathway, leading to the production of the 2 final stereoisomers that contain additional polyketide modification whose structures have still to be determined. In Aspergillus terreus (strain NIH 2624 / FGSC A1156), this protein is FAD-linked oxidoreductase tazL.